We begin with the raw amino-acid sequence, 487 residues long: Glutamyl-tRNA(Gln) amidotransferase subunit A (487 aa).

Catalysis depends on charge relay system residues Lys78 and Ser153. Catalysis depends on Ser177, which acts as the Acyl-ester intermediate.

The protein belongs to the amidase family. GatA subfamily. Heterotrimer of A, B and C subunits.

It catalyses the reaction L-glutamyl-tRNA(Gln) + L-glutamine + ATP + H2O = L-glutaminyl-tRNA(Gln) + L-glutamate + ADP + phosphate + H(+). Functionally, allows the formation of correctly charged Gln-tRNA(Gln) through the transamidation of misacylated Glu-tRNA(Gln) in organisms which lack glutaminyl-tRNA synthetase. The reaction takes place in the presence of glutamine and ATP through an activated gamma-phospho-Glu-tRNA(Gln). In Oleidesulfovibrio alaskensis (strain ATCC BAA-1058 / DSM 17464 / G20) (Desulfovibrio alaskensis), this protein is Glutamyl-tRNA(Gln) amidotransferase subunit A.